The chain runs to 691 residues: Elongation factor G (691 aa).

One can recognise a tr-type G domain in the interval 6-281 (SRYRNIGIMA…GVVDFLPSPI (276 aa)). GTP is bound by residues 15-22 (AHIDAGKT), 79-83 (DTPGH), and 133-136 (NKMD).

The protein belongs to the TRAFAC class translation factor GTPase superfamily. Classic translation factor GTPase family. EF-G/EF-2 subfamily.

It is found in the cytoplasm. In terms of biological role, catalyzes the GTP-dependent ribosomal translocation step during translation elongation. During this step, the ribosome changes from the pre-translocational (PRE) to the post-translocational (POST) state as the newly formed A-site-bound peptidyl-tRNA and P-site-bound deacylated tRNA move to the P and E sites, respectively. Catalyzes the coordinated movement of the two tRNA molecules, the mRNA and conformational changes in the ribosome. The protein is Elongation factor G of Wolbachia pipientis subsp. Culex pipiens (strain wPip).